A 212-amino-acid chain; its full sequence is Thymidylate kinase (212 aa).

An ATP-binding site is contributed by 11–18; sequence GPEGAGKT.

Belongs to the thymidylate kinase family.

The enzyme catalyses dTMP + ATP = dTDP + ADP. Functionally, phosphorylation of dTMP to form dTDP in both de novo and salvage pathways of dTTP synthesis. This Streptococcus pneumoniae (strain Taiwan19F-14) protein is Thymidylate kinase.